Reading from the N-terminus, the 459-residue chain is Vasoactive intestinal polypeptide receptor 1 (459 aa).

The N-terminal stretch at methionine 1–alanine 30 is a signal peptide. Residues alanine 31 to alanine 142 lie on the Extracellular side of the membrane. Cystine bridges form between cysteine 37–cysteine 209, cysteine 50–cysteine 72, cysteine 63–cysteine 105, cysteine 86–cysteine 122, and cysteine 216–cysteine 286. 4 N-linked (GlcNAc...) asparagine glycosylation sites follow: asparagine 58, asparagine 69, asparagine 100, and asparagine 104. Residues valine 143–leucine 167 form a helical membrane-spanning segment. At phenylalanine 168–arginine 175 the chain is on the cytoplasmic side. The chain crosses the membrane as a helical span at residues asparagine 176 to aspartate 197. Residues methionine 198–lysine 217 are Extracellular-facing. A helical transmembrane segment spans residues alanine 218–histidine 242. The Cytoplasmic portion of the chain corresponds to threonine 243–tyrosine 255. The helical transmembrane segment at phenylalanine 256–valine 277 threads the bilayer. Residues arginine 278 to serine 293 are Extracellular-facing. An N-linked (GlcNAc...) asparagine glycan is attached at asparagine 292. A helical transmembrane segment spans residues serine 294 to isoleucine 318. At arginine 319–arginine 340 the chain is on the cytoplasmic side. The chain crosses the membrane as a helical span at residues leucine 341–phenylalanine 361. Residues phenylalanine 362–glutamine 369 are Extracellular-facing. Residues valine 370–leucine 393 traverse the membrane as a helical segment. The Cytoplasmic portion of the chain corresponds to asparagine 394–valine 459.

This sequence belongs to the G-protein coupled receptor 2 family. Interacts with ADCYAP1/PACAP; activated by both PACAP27 and PACAP38 neuropeptides. Interacts with VIP; the interaction results in VIPR1 activation.

It localises to the cell membrane. Its function is as follows. G protein-coupled receptor activated by the neuropeptides vasoactive intestinal peptide (VIP) and pituitary adenylate cyclase-activating polypeptide (ADCYAP1/PACAP). Binds VIP and both PACAP27 and PACAP38 bioactive peptides with the following order of ligand affinity VIP = PACAP27 &gt; PACAP38. Ligand binding causes a conformation change that triggers signaling via guanine nucleotide-binding proteins (G proteins) and modulates the activity of downstream effectors. Activates cAMP-dependent pathway. In Mus musculus (Mouse), this protein is Vasoactive intestinal polypeptide receptor 1.